Consider the following 476-residue polypeptide: MAIKFLEVIKPFCVILPEIQKPERKIQFKEKVLWTAITLFIFLVCCQIPLFGIMSSDSADPFYWMRVILASNRGTLMELGISPIVTSGLIMQLLAGAKIIEVGDTPKDRALFNGAQKLFGMIITIGQSIVYVMTGMYGDPSEMGAGICLLITIQLFVAGLIVLLLDELLQKGYGLGSGISLFIATNICETIVWKAFSPTTVNTGRGMEFEGAIIALFHLLATRTDKVRALREAFYRQNLPNLMNLIATIFVFAVVIYFQGFRVDLPIKSARYRGQYNTYPIKLFYTSNIPIILQSALVSNLYVISQMLSARFSGNLLVSLLGTWSDTSSGGPARAYPVGGLCYYLSPPESFGSVLEDPVHAVVYIVFMLGSCAFFSKTWIEVSGSSAKDVAKQLKEQQMVMRGHRETSMVHELNRYIPTAAAFGGLCIGALSVLADFLGAIGSGTGILLAVTIIYQYFEIFVKEQSEVGSMGALLF.

Residues 1–33 (MAIKFLEVIKPFCVILPEIQKPERKIQFKEKVL) are Cytoplasmic-facing. The helical transmembrane segment at 34 to 53 (WTAITLFIFLVCCQIPLFGI) threads the bilayer. Residues 54–76 (MSSDSADPFYWMRVILASNRGTL) lie on the Lumenal side of the membrane. The helical transmembrane segment at 77–96 (MELGISPIVTSGLIMQLLAG) threads the bilayer. The Cytoplasmic portion of the chain corresponds to 97–117 (AKIIEVGDTPKDRALFNGAQK). Residues 118–138 (LFGMIITIGQSIVYVMTGMYG) traverse the membrane as a helical segment. Topologically, residues 139–144 (DPSEMG) are lumenal. A helical membrane pass occupies residues 145–165 (AGICLLITIQLFVAGLIVLLL). Topologically, residues 166–172 (DELLQKG) are cytoplasmic. Residues 173 to 193 (YGLGSGISLFIATNICETIVW) form a helical membrane-spanning segment. Over 194–240 (KAFSPTTVNTGRGMEFEGAIIALFHLLATRTDKVRALREAFYRQNLP) the chain is Lumenal. Residues 241 to 261 (NLMNLIATIFVFAVVIYFQGF) traverse the membrane as a helical segment. Residues 262–288 (RVDLPIKSARYRGQYNTYPIKLFYTSN) lie on the Cytoplasmic side of the membrane. A helical transmembrane segment spans residues 289–309 (IPIILQSALVSNLYVISQMLS). The Lumenal portion of the chain corresponds to 310-354 (ARFSGNLLVSLLGTWSDTSSGGPARAYPVGGLCYYLSPPESFGSV). A helical membrane pass occupies residues 355–375 (LEDPVHAVVYIVFMLGSCAFF). Over 376–420 (SKTWIEVSGSSAKDVAKQLKEQQMVMRGHRETSMVHELNRYIPTA) the chain is Cytoplasmic. A helical membrane pass occupies residues 421–441 (AAFGGLCIGALSVLADFLGAI). Over 442 to 445 (GSGT) the chain is Lumenal. The helical transmembrane segment at 446 to 462 (GILLAVTIIYQYFEIFV) threads the bilayer. At 463–476 (KEQSEVGSMGALLF) the chain is on the cytoplasmic side.

This sequence belongs to the SecY/SEC61-alpha family. In terms of assembly, the SEC61 channel-forming translocon complex consists of channel-forming core components SEC61A1, SEC61B and SEC61G and different auxiliary components such as SEC62 and SEC63. The SEC61 channel associates with the multi-pass translocon (MPT) complex. Expressed in proximal and distal tubules in kidney (at protein level).

It localises to the endoplasmic reticulum membrane. In terms of biological role, component of SEC61 channel-forming translocon complex that mediates transport of signal peptide-containing precursor polypeptides across the endoplasmic reticulum (ER). Forms a ribosome receptor and a gated pore in the ER membrane, both functions required for cotranslational translocation of nascent polypeptides. May cooperate with auxiliary protein SEC62, SEC63 and HSPA5/BiP to enable post-translational transport of small presecretory proteins. The SEC61 channel is also involved in ER membrane insertion of transmembrane proteins: it mediates membrane insertion of the first few transmembrane segments of proteins, while insertion of subsequent transmembrane regions of multi-pass membrane proteins is mediated by the multi-pass translocon (MPT) complex. The SEC61 channel cooperates with the translocating protein TRAM1 to import nascent proteins into the ER. Controls the passive efflux of calcium ions from the ER lumen to the cytosol through SEC61 channel, contributing to the maintenance of cellular calcium homeostasis. Plays a critical role in nephrogenesis, specifically at pronephros stage. This Homo sapiens (Human) protein is Protein transport protein Sec61 subunit alpha isoform 1 (SEC61A1).